We begin with the raw amino-acid sequence, 295 residues long: MEHLVDINDVESEEIEQLLDLAASMKENPGEFSGVMDNKSLVMLFAKPSTRTRLSFETGMTQLGGHGIFFEMGSSQLSRGEPISDVSQVMSRYEDAIMARLFEHDEMMELAENADVPVVNGLTDFLHPCQALTDMFTMQEKDRLDTLAFVGDGNNVAHSLMQASAKMGVDCRIATPEGMEPDEEIQDRVSDANVTVTNDPYEAVDGATAVYGDVFVSMGEEEQREEKLAEFDGFQIDQDLMDAARDDAIFMHCLPAHRGEEVTAEVADGPQSVIFDQAENRMHVQKAIVHTLVNQ.

Carbamoyl phosphate-binding positions include 49-52 (STRT), Q76, R100, and 127-130 (HPCQ). Residues N155, D213, and 217–218 (SM) contribute to the L-ornithine site. Residues 253–254 (CL) and R281 each bind carbamoyl phosphate.

Belongs to the aspartate/ornithine carbamoyltransferase superfamily. OTCase family. As to quaternary structure, homohexamer.

It localises to the cytoplasm. It catalyses the reaction carbamoyl phosphate + L-ornithine = L-citrulline + phosphate + H(+). It functions in the pathway amino-acid degradation; L-arginine degradation via ADI pathway; carbamoyl phosphate from L-arginine: step 2/2. With respect to regulation, arginine lead to a slight activation. Inhibited by all nucleotide phosphates. Reversibly catalyzes the transfer of the carbamoyl group from carbamoyl phosphate (CP) to the N(epsilon) atom of ornithine (ORN) to produce L-citrulline. The chain is Ornithine carbamoyltransferase, catabolic (arcB) from Halobacterium salinarum (strain ATCC 700922 / JCM 11081 / NRC-1) (Halobacterium halobium).